Reading from the N-terminus, the 61-residue chain is Photosystem II reaction center protein K (61 aa).

Residues 1–24 (MLNIFNLICICFNSALFSSSFLFA) constitute a propeptide that is removed on maturation. Residues 36–56 (IVDFMPVIPVLFFLLAFVWQA) traverse the membrane as a helical segment.

The protein belongs to the PsbK family. As to quaternary structure, PSII is composed of 1 copy each of membrane proteins PsbA, PsbB, PsbC, PsbD, PsbE, PsbF, PsbH, PsbI, PsbJ, PsbK, PsbL, PsbM, PsbT, PsbX, PsbY, PsbZ, Psb30/Ycf12, at least 3 peripheral proteins of the oxygen-evolving complex and a large number of cofactors. It forms dimeric complexes.

The protein resides in the plastid. The protein localises to the chloroplast thylakoid membrane. Functionally, one of the components of the core complex of photosystem II (PSII). PSII is a light-driven water:plastoquinone oxidoreductase that uses light energy to abstract electrons from H(2)O, generating O(2) and a proton gradient subsequently used for ATP formation. It consists of a core antenna complex that captures photons, and an electron transfer chain that converts photonic excitation into a charge separation. The sequence is that of Photosystem II reaction center protein K from Gossypium barbadense (Sea Island cotton).